We begin with the raw amino-acid sequence, 296 residues long: Biliverdin reductase A (296 aa).

The propeptide occupies 1–2 (MN). NADP(+) contacts are provided by residues 16-19 (VGRA), 44-46 (SRR), 77-80 (SSSH), and Tyr98. Thr174 bears the Phosphothreonine mark. 2 positions are modified to phosphoserine: Ser178 and Ser230. Residues Lys248 and Lys253 each carry the N6-acetyllysine modification. Zn(2+) is bound by residues His280, Cys281, Cys292, and Cys293.

It belongs to the Gfo/Idh/MocA family. Biliverdin reductase subfamily. Monomer. Zn(2+) is required as a cofactor. Liver.

Its subcellular location is the cytoplasm. It localises to the cytosol. The catalysed reaction is (4Z,15Z)-bilirubin IXalpha + NAD(+) = biliverdin IXalpha + NADH + H(+). The enzyme catalyses (4Z,15Z)-bilirubin IXalpha + NADP(+) = biliverdin IXalpha + NADPH + H(+). The protein operates within porphyrin-containing compound metabolism; protoheme degradation. Functionally, reduces the gamma-methene bridge of the open tetrapyrrole, biliverdin IXalpha, to bilirubin with the concomitant oxidation of a NADH or NADPH cofactor. Does not reduce bilirubin IXbeta. Uses the reactants NADH or NADPH depending on the pH; NADH is used at the acidic pH range (6-6.9) and NADPH at the alkaline range (8.5-8.7). NADPH, however, is the probable reactant in biological systems. The sequence is that of Biliverdin reductase A from Homo sapiens (Human).